Reading from the N-terminus, the 227-residue chain is Ribose-5-phosphate isomerase A (227 aa).

Substrate contacts are provided by residues 26 to 29 (TGST), 82 to 85 (DGAD), and 95 to 98 (KGGG). E104 serves as the catalytic Proton acceptor. Residue K122 participates in substrate binding.

It belongs to the ribose 5-phosphate isomerase family. As to quaternary structure, homodimer.

The catalysed reaction is aldehydo-D-ribose 5-phosphate = D-ribulose 5-phosphate. Its pathway is carbohydrate degradation; pentose phosphate pathway; D-ribose 5-phosphate from D-ribulose 5-phosphate (non-oxidative stage): step 1/1. Its function is as follows. Catalyzes the reversible conversion of ribose-5-phosphate to ribulose 5-phosphate. In Streptococcus pyogenes serotype M2 (strain MGAS10270), this protein is Ribose-5-phosphate isomerase A.